The following is a 445-amino-acid chain: Histamine H3 receptor (445 aa).

Residues 1–39 lie on the Extracellular side of the membrane; it reads MERAPPDGLMNASGTLAGEAAAAGGARGFSAAWTAVLAA. A glycan (N-linked (GlcNAc...) asparagine) is linked at N11. A helical membrane pass occupies residues 40–60; sequence LMALLIVATVLGNALVMLAFV. Topologically, residues 61 to 70 are cytoplasmic; the sequence is ADSSLRTQNN. A helical transmembrane segment spans residues 71–91; the sequence is FFLLNLAISDFLVGAFCIPLY. The Extracellular segment spans residues 92-108; that stretch reads VPYVLTGRWTFGRGLCK. Residues C107 and C188 are joined by a disulfide bond. A helical transmembrane segment spans residues 109–129; the sequence is LWLVVDYLLCASSVFNIVLIS. Topologically, residues 130-156 are cytoplasmic; the sequence is YDRFLSVTRAVSYRAQQGDTRRAVRKM. The chain crosses the membrane as a helical span at residues 157–177; sequence ALVWVLAFLLYGPAILSWEYL. Residues 178 to 196 are Extracellular-facing; sequence SGGSSIPEGHCYAEFFYNW. Residues 197-217 form a helical membrane-spanning segment; it reads YFLITASTLEFFTPFLSVTFF. The Cytoplasmic segment spans residues 218-359; that stretch reads NLSIYLNIQR…LSRDKKVAKS (142 aa). Disordered regions lie at residues 234–259 and 286–336; these read DGGR…PSCW and AGEA…LEKR. Residues 241 to 256 show a composition bias toward pro residues; sequence PEPPPDAQPSPPPAPP. A compositionally biased stretch (gly residues) spans 290–299; the sequence is ALGGGSGGGA. Low complexity predominate over residues 300-312; sequence AASPTSSSGSSSR. A helical membrane pass occupies residues 360-380; that stretch reads LAIIVSIFGLCWAPYTLLMII. The Extracellular portion of the chain corresponds to 381–396; it reads RAACHGRCIPDYWYET. Residues 397-417 form a helical membrane-spanning segment; that stretch reads SFWLLWANSAVNPVLYPLCHY. Over 418–445 the chain is Cytoplasmic; sequence SFRRAFTKLLCPQKLKVQPHGSLEQCWK. S439 carries the phosphoserine modification.

Belongs to the G-protein coupled receptor 1 family. Expressed abundantly in brain, most notably throughout the thalamus, the ventromedial hypothalamus and the caudate nucleus. Isoform 1 is largely predominant in all tissues.

Its subcellular location is the cell membrane. Functionally, the H3 subclass of histamine receptors could mediate the histamine signals in CNS and peripheral nervous system. Signals through the inhibition of adenylate cyclase and displays high constitutive activity (spontaneous activity in the absence of agonist). In Rattus norvegicus (Rat), this protein is Histamine H3 receptor (Hrh3).